Reading from the N-terminus, the 860-residue chain is Leucine-rich repeat and death domain-containing protein 1 (860 aa).

Positions 1–103 (MSEKEGMSEV…TGTSQSLSSL (103 aa)) are disordered. Positions 50–72 (KSSNQIYETHPRQNTLESTSSSG) are enriched in polar residues. Residues 90–103 (TSTRTGTSQSLSSL) are compositionally biased toward low complexity. 26 LRR repeats span residues 139 to 163 (LGAD…ILKI), 164 to 186 (KYVK…DSGD), 187 to 210 (LLGL…IQLL), 211 to 233 (HNLR…ISQL), 235 to 256 (NIRQ…LECL), 257 to 279 (GNLE…LPSL), 281 to 302 (TLRV…LCFL), 303 to 325 (PKLI…IREL), 326 to 348 (KNLE…IFQL), 350 to 371 (KIKE…IENF), 372 to 394 (RELR…ISCC), 396 to 417 (MLEC…IHKL), 419 to 440 (NLRK…ISHL), 441 to 463 (NNIC…IKNC), 465 to 486 (KIIK…LCAL), 487 to 510 (DSLY…SFSK), 512 to 532 (LLHL…FCSL), 533 to 555 (INLK…ISNM), 557 to 578 (SLHV…LCTL), 579 to 601 (ENLQ…ICNL), 603 to 624 (GIQK…LCQL), 627 to 650 (LEQL…LSNM), 651 to 673 (TQLK…IGEL), 675 to 696 (NLVS…LLSL), 697 to 719 (NDLQ…IYNI), and 721 to 742 (SLKE…ICKG). The Death domain occupies 764–852 (EKIFKIVANN…EIMDKITALN (89 aa)). The LRR 27 repeat unit spans residues 856–860 (RAIKF).

The sequence is that of Leucine-rich repeat and death domain-containing protein 1 (LRRD1) from Homo sapiens (Human).